Consider the following 217-residue polypeptide: uncharacterized protein (217 aa).

An ABC transporter domain is found at 2 to 216 (LCVKNVSLRL…AQWSENYNKL (215 aa)). An ATP-binding site is contributed by 34–41 (GPSGCGKS).

This sequence belongs to the ABC transporter superfamily.

In terms of biological role, probably part of a binding-protein-dependent transport system YnjCD. Probably responsible for energy coupling to the transport system. This is an uncharacterized protein from Escherichia coli (strain K12).